The sequence spans 442 residues: D-serine dehydratase (442 aa).

The residue at position 118 (K118) is an N6-(pyridoxal phosphate)lysine.

The protein belongs to the serine/threonine dehydratase family. DsdA subfamily. Monomer. Requires pyridoxal 5'-phosphate as cofactor.

It carries out the reaction D-serine = pyruvate + NH4(+). This Escherichia coli O81 (strain ED1a) protein is D-serine dehydratase.